Consider the following 755-residue polypeptide: Photosystem I P700 chlorophyll a apoprotein A1 (755 aa).

Helical transmembrane passes span 72-95 (IFSAHFGHLAVVFIWLSGMYFHGA), 158-181 (LYCTAIGGLVMAGLMLFAGWFHYH), 197-221 (LNHHLAGLLGLGSLSWAGHQIHVSL), 297-315 (TAHHHLAIAVLFIIAGHMY), 352-375 (WHAQLAINLAMMGSLSIIVAQHMY), 391-417 (LSLFTHHMWIGGFLVVGGAAHGAIFMV), 439-461 (AIISHLNWVCIFLGFHSFGLYVH), and 536-554 (FMVHHIHAFTIHVTVLILL). [4Fe-4S] cluster-binding residues include cysteine 578 and cysteine 587. Transmembrane regions (helical) follow at residues 594 to 615 (HVFLGLFWMYNCISVVIFHFSW) and 669 to 691 (LSAYGLLFLGAHFIWAFSLMFLF). Position 680 (histidine 680) interacts with chlorophyll a'. Positions 688 and 696 each coordinate chlorophyll a. Phylloquinone is bound at residue tryptophan 697. The chain crosses the membrane as a helical span at residues 729 to 749 (AVGVAHYLLGGIATTWAFFLA).

The protein belongs to the PsaA/PsaB family. The PsaA/B heterodimer binds the P700 chlorophyll special pair and subsequent electron acceptors. PSI consists of a core antenna complex that captures photons, and an electron transfer chain that converts photonic excitation into a charge separation. The cyanobacterial PSI reaction center is composed of one copy each of PsaA,B,C,D,E,F,I,J,K,L,M and X, and forms trimeric complexes. The cofactor is PSI electron transfer chain: 5 chlorophyll a, 1 chlorophyll a', 2 phylloquinones and 3 4Fe-4S clusters. PSI core antenna: 90 chlorophyll a, 22 carotenoids, 3 phospholipids and 1 galactolipid. P700 is a chlorophyll a/chlorophyll a' dimer, A0 is one or more chlorophyll a, A1 is one or both phylloquinones and FX is a shared 4Fe-4S iron-sulfur center..

It localises to the cellular thylakoid membrane. It catalyses the reaction reduced [plastocyanin] + hnu + oxidized [2Fe-2S]-[ferredoxin] = oxidized [plastocyanin] + reduced [2Fe-2S]-[ferredoxin]. Functionally, psaA and PsaB bind P700, the primary electron donor of photosystem I (PSI), as well as the electron acceptors A0, A1 and FX. PSI is a plastocyanin/cytochrome c6-ferredoxin oxidoreductase, converting photonic excitation into a charge separation, which transfers an electron from the donor P700 chlorophyll pair to the spectroscopically characterized acceptors A0, A1, FX, FA and FB in turn. Oxidized P700 is reduced on the lumenal side of the thylakoid membrane by plastocyanin or cytochrome c6. This is Photosystem I P700 chlorophyll a apoprotein A1 from Thermostichus vulcanus (Synechococcus vulcanus).